Here is a 177-residue protein sequence, read N- to C-terminus: Anditomin synthesis protein L (177 aa).

Helical transmembrane passes span V54–M74 and I117–F137. N165 is a glycosylation site (N-linked (GlcNAc...) asparagine).

Its subcellular location is the membrane. The protein operates within secondary metabolite biosynthesis; terpenoid biosynthesis. Part of the gene cluster that mediates the biosynthesis of anditomin, a fungal meroterpenoid. The first step of the pathway is the synthesis of 3,5-dimethylorsellinic acid (DMOA) by the polyketide synthase andM. DMOA is then converted to the phthalide compound 5,7-dihydroxy-4,6-dimethylphthalide (DHDMP) by the cytochrome P450 monooxygenase andK, which is further prenylated by the prenyltransferase andD to yield farnesyl-DHDMP. Further epoxidation by the FAD-dependent monooxygenase andE leads to epoxyfarnesyl-DHDMP. The next step involves the terpene cyclase andB that converts epoxyfarnesyl-DHDMP into preandiloid A through opening of the epoxide ring followed by the cyclization of the farnesyl moiety. Preandiloid A is in turn oxidized at the C-3 hydroxyl group to yield preandiloid B by the dehydrogenase andC. The dioxygenase andA is solely responsible for the dehydrogenation of preandiloid B leading to the enone preandiloid C, as well as for the intriguing structural rearrangement to generate the bicyclo[2.2.2]octane core, transforming preandiloid C into andiconin. FAD-binding monooxygenase andJ then produces andilesin D which is reduced by dehydrogenase andI to yield andilesin A. Action of acetyltransferase andG followed by a spontaneous acetate elimination leads then to andilesin B, which is in turn substrate of the short chain dehydrogenase andH to yield andilesin C. Finally, the dioxygenase andF catalyzes the transformation of andilesin C to anditomin. The exact role of andL within the anditomin biosynthetic pathway has not been identified yet. The chain is Anditomin synthesis protein L from Emericella variicolor (Aspergillus stellatus).